Here is a 307-residue protein sequence, read N- to C-terminus: D-alanine--D-alanine ligase (307 aa).

The 201-residue stretch at 101–301 (KDVLRAAGVP…FGELVRWMVE (201 aa)) folds into the ATP-grasp domain. 128–182 (MTPPYVVKPLGEGSSFGVIIVRADQTHPPQELTRDDWAYGDLVLVERFVAGRELT) is an ATP binding site. 3 residues coordinate Mg(2+): D251, E268, and N270.

It belongs to the D-alanine--D-alanine ligase family. Requires Mg(2+) as cofactor. The cofactor is Mn(2+).

It is found in the cytoplasm. It catalyses the reaction 2 D-alanine + ATP = D-alanyl-D-alanine + ADP + phosphate + H(+). The protein operates within cell wall biogenesis; peptidoglycan biosynthesis. Functionally, cell wall formation. In Methylocella silvestris (strain DSM 15510 / CIP 108128 / LMG 27833 / NCIMB 13906 / BL2), this protein is D-alanine--D-alanine ligase.